A 520-amino-acid polypeptide reads, in one-letter code: Peptidoglycan-recognition protein LC (520 aa).

Composition is skewed to polar residues over residues 1–14 and 27–36; these read MPFSNETEMSQCSN and KNCSTSSTDS. Disordered stretches follow at residues 1–78 and 239–278; these read MPFS…RISV and DKWKPGEGPAGGQDNPAFNGGPSTNGSAPGSKHEDPAQTP. At 1 to 291 the chain is on the cytoplasmic side; the sequence is MPFSNETEMS…PFLPNTVGRK (291 aa). 2 stretches are compositionally biased toward basic and acidic residues: residues 48–58 and 66–78; these read RPEKETKDRGT and KSEEKTESKRISV. Residues 292–312 form a helical; Signal-anchor for type II membrane protein membrane-spanning segment; the sequence is AVTVTVVFVTLTFLLGIVLAT. Residues 313–520 lie on the Extracellular side of the membrane; that stretch reads TTNLFGKTLN…ASFANWTHWS (208 aa). The N-linked (GlcNAc...) asparagine glycan is linked to asparagine 389. A disulfide bridge connects residues cysteine 390 and cysteine 396. An N-acetylmuramoyl-L-alanine amidase domain is found at 412–490; it reads QKCDIAYNFL…KLGKIAPSYR (79 aa). N-linked (GlcNAc...) asparagine glycosylation is present at asparagine 515.

The protein belongs to the N-acetylmuramoyl-L-alanine amidase 2 family. Post-translationally, proteolytically cleaved, probably by a metaloprotease such as Mmp2; proteolytic cleavage leads to activation of the imd/Relish signaling pathway. In terms of tissue distribution, expressed in the fat body and hemocytes.

It is found in the membrane. Activated by proteolytic cleavage in response to Gram-negative bacterial infection; cleavage may be mediated by endogenous proteases, such as the metalloprotease Mmp2 or elastase, or by bacterially expressed proteases such as the surface serine protease OmpT. Functionally, major activator of the imd/Relish pathway and is likely to encode a pattern recognition molecule for the humoral immune response. Required for Relish processing and nuclear translocation following proteolytic cleavage. Involved in the response to lipopolysaccharide (LPS) and peptidoglycan of Gram-negative bacteria. The different isoforms probably display different recognition capabilities to various microbial patterns. In terms of biological role, mediates the response to LPS and Gram-negative bacteria. Its function is as follows. Mediates the response to LPS, peptidoglycan and Gram-negative bacteria. The protein is Peptidoglycan-recognition protein LC (PGRP-LC) of Drosophila melanogaster (Fruit fly).